We begin with the raw amino-acid sequence, 452 residues long: Probable glycine dehydrogenase (decarboxylating) subunit 1 (452 aa).

The protein belongs to the GcvP family. N-terminal subunit subfamily. As to quaternary structure, the glycine cleavage system is composed of four proteins: P, T, L and H. In this organism, the P 'protein' is a heterodimer of two subunits.

The enzyme catalyses N(6)-[(R)-lipoyl]-L-lysyl-[glycine-cleavage complex H protein] + glycine + H(+) = N(6)-[(R)-S(8)-aminomethyldihydrolipoyl]-L-lysyl-[glycine-cleavage complex H protein] + CO2. Functionally, the glycine cleavage system catalyzes the degradation of glycine. The P protein binds the alpha-amino group of glycine through its pyridoxal phosphate cofactor; CO(2) is released and the remaining methylamine moiety is then transferred to the lipoamide cofactor of the H protein. This Alcanivorax borkumensis (strain ATCC 700651 / DSM 11573 / NCIMB 13689 / SK2) protein is Probable glycine dehydrogenase (decarboxylating) subunit 1.